A 176-amino-acid polypeptide reads, in one-letter code: Translation initiation factor IF-3 (176 aa).

It belongs to the IF-3 family. As to quaternary structure, monomer.

It localises to the cytoplasm. Functionally, IF-3 binds to the 30S ribosomal subunit and shifts the equilibrium between 70S ribosomes and their 50S and 30S subunits in favor of the free subunits, thus enhancing the availability of 30S subunits on which protein synthesis initiation begins. The polypeptide is Translation initiation factor IF-3 (Streptococcus pyogenes serotype M4 (strain MGAS10750)).